Reading from the N-terminus, the 280-residue chain is 4-diphosphocytidyl-2-C-methyl-D-erythritol kinase (280 aa).

The active site involves lysine 9. 92–102 (PMGGGLGGGSS) contributes to the ATP binding site. Residue aspartate 134 is part of the active site.

It belongs to the GHMP kinase family. IspE subfamily.

The enzyme catalyses 4-CDP-2-C-methyl-D-erythritol + ATP = 4-CDP-2-C-methyl-D-erythritol 2-phosphate + ADP + H(+). Its pathway is isoprenoid biosynthesis; isopentenyl diphosphate biosynthesis via DXP pathway; isopentenyl diphosphate from 1-deoxy-D-xylulose 5-phosphate: step 3/6. Its function is as follows. Catalyzes the phosphorylation of the position 2 hydroxy group of 4-diphosphocytidyl-2C-methyl-D-erythritol. In Nitrosococcus oceani (strain ATCC 19707 / BCRC 17464 / JCM 30415 / NCIMB 11848 / C-107), this protein is 4-diphosphocytidyl-2-C-methyl-D-erythritol kinase.